The sequence spans 617 residues: Protein 4.1 (617 aa).

An FERM domain is found at 1–282 (MHCKVSLLDD…EHHTFFRLTS (282 aa)). Position 13 is a phosphotyrosine (tyrosine 13). Threonine 169 carries the phosphothreonine modification. The tract at residues 308-401 (TRQASALIDR…AEPEPSEAWK (94 aa)) is disordered. A phosphoserine mark is found at serine 312, serine 331, and serine 333. Residues 348-361 (RPTSAPAIAPSPAA) are compositionally biased toward low complexity. The span at 387 to 396 (APPEDAEPEP) shows a compositional bias: acidic residues. Residues 401–466 (KKKRERLDGE…WDKRLSTHSP (66 aa)) form a spectrin--actin-binding region. Residue tyrosine 413 is modified to Phosphotyrosine; by EGFR. Phosphoserine occurs at positions 417, 427, 437, and 462. Serine 465 bears the Phosphoserine; by CDK1 mark. Residues 467–617 (FRTLNINGQI…VHQETEISEE (151 aa)) form a C-terminal (CTD) region. Phosphothreonine is present on residues threonine 489 and threonine 612.

In terms of assembly, binds with a high affinity to glycophorin and with lower affinity to band III protein. Associates with the nuclear mitotic apparatus. Binds calmodulin, CPAP and DLG1. Also found to associate with contractile apparatus and tight junctions. Interacts with NUMA1; this interaction is negatively regulated by CDK1 during metaphase and promotes anaphase-specific localization of NUMA1 in symmetrically dividing cells. Interacts with ATP2B1; regulates small intestinal calcium absorption through regulation of membrane expression of ATP2B1. In terms of processing, phosphorylated at multiple sites by different protein kinases and each phosphorylation event selectively modulates the protein's functions. Post-translationally, phosphorylation on Tyr-413 reduces the ability of 4.1 to promote the assembly of the spectrin/actin/4.1 ternary complex.

The protein localises to the nucleus. Its subcellular location is the cytoplasm. It is found in the cytoskeleton. The protein resides in the cell cortex. Protein 4.1 is a major structural element of the erythrocyte membrane skeleton. It plays a key role in regulating membrane physical properties of mechanical stability and deformability by stabilizing spectrin-actin interaction. Recruits DLG1 to membranes. Required for dynein-dynactin complex and NUMA1 recruitment at the mitotic cell cortex during anaphase. The polypeptide is Protein 4.1 (Bos taurus (Bovine)).